A 320-amino-acid polypeptide reads, in one-letter code: D-amino-acid oxidase (320 aa).

12 residues coordinate FAD: Gly-18, Gly-19, Val-20, Ile-21, Thr-47, Thr-48, Ser-49, Gly-53, Gly-54, Leu-55, Val-161, and Thr-176. 2 residues coordinate D-proline: Tyr-220 and Arg-275. The D-serine site is built by Tyr-220 and Arg-275. FAD is bound by residues Arg-275, Gly-301, Gly-302, Gly-304, and Thr-306. A D-proline-binding site is contributed by Gly-302. Gly-302 contacts D-serine.

The protein belongs to the DAMOX/DASOX family. It depends on FAD as a cofactor.

The protein resides in the cytoplasm. Its subcellular location is the secreted. The protein localises to the cell wall. The enzyme catalyses a D-alpha-amino acid + O2 + H2O = a 2-oxocarboxylate + H2O2 + NH4(+). The catalysed reaction is D-leucine + O2 + H2O = 4-methyl-2-oxopentanoate + H2O2 + NH4(+). It carries out the reaction D-valine + O2 + H2O = 3-methyl-2-oxobutanoate + H2O2 + NH4(+). It catalyses the reaction D-isoleucine + O2 + H2O = (R)-3-methyl-2-oxopentanoate + H2O2 + NH4(+). The enzyme catalyses D-methionine + O2 + H2O = 4-methylsulfanyl-2-oxobutanoate + H2O2 + NH4(+). Its function is as follows. Catalyzes the oxidative deamination of D-amino acids with broad substrate specificity. This Streptomyces coelicolor (strain ATCC BAA-471 / A3(2) / M145) protein is D-amino-acid oxidase.